Here is a 241-residue protein sequence, read N- to C-terminus: Uridylate kinase (241 aa).

15-18 provides a ligand contact to ATP; that stretch reads KISG. Residues 23-28 are involved in allosteric activation by GTP; that stretch reads GDQGFG. Gly57 is a UMP binding site. ATP is bound by residues Gly58 and Arg62. Residues Asp77 and 138-145 each bind UMP; that span reads TGNPYFTT. 3 residues coordinate ATP: Thr165, Tyr171, and Asp174.

This sequence belongs to the UMP kinase family. As to quaternary structure, homohexamer.

It localises to the cytoplasm. It catalyses the reaction UMP + ATP = UDP + ADP. It functions in the pathway pyrimidine metabolism; CTP biosynthesis via de novo pathway; UDP from UMP (UMPK route): step 1/1. With respect to regulation, allosterically activated by GTP. Inhibited by UTP. Catalyzes the reversible phosphorylation of UMP to UDP. This is Uridylate kinase from Paracoccus zeaxanthinifaciens.